Reading from the N-terminus, the 421-residue chain is MAAAFGRCCRVLRSISRFHWRSQHTKADRQREPGLGFSFEFTEQQKEFQATARKFAREEIIPVAAEYDKTGEYPVPLIRRAWELGLMNPHIPQNCGGLGLGTFDACLISEELAYGCTGVQTAIEGNSLGQMPIIIAGNEQQKKKYLGRMTEEPLMCAYCVTEPGAGSDVAGIKTKAEKKGDEYIINGQKMWITNGGKASWYFLLARSDPDPKAPANKAFTGFIVEADTPGIQIGRKELNMGQRCSDTRGIVFEDVKVLKENVLIGDGAGFKIAMGAFDKTRPTVSSGAVGLAQRALDEATKYALERKTFGKLLIEHQAISFMLAEMAMKVELARMSYQRAAWEVDSGRRNTYYASIAKAFAGDIANQLATDAVQIFGGNGFNTEYPVEKLMRDAKIYQIYEGTSQIQRLIIAREHIGKYKS.

A mitochondrion-targeting transit peptide spans methionine 1 to threonine 25. N6-acetyllysine; alternate is present on lysine 69. The residue at position 69 (lysine 69) is an N6-succinyllysine; alternate. Residue tyrosine 158–serine 167 participates in FAD binding. Serine 167 contacts octanoyl-CoA. Lysine 179 carries the N6-succinyllysine modification. Residue tryptophan 191 to threonine 193 coordinates FAD. An N6-acetyllysine; alternate mark is found at lysine 212, lysine 217, lysine 259, and lysine 271. N6-succinyllysine; alternate occurs at positions 212, 217, 259, and 271. Aspartate 278 lines the octanoyl-CoA pocket. Position 279 is an N6-acetyllysine (lysine 279). Arginine 281 lines the octanoyl-CoA pocket. Lysine 301 carries the post-translational modification N6-acetyllysine. Residues arginine 306–threonine 308 and histidine 316–glutamine 317 each bind FAD. Octanoyl-CoA is bound by residues arginine 349 and threonine 351. Position 351 is a phosphothreonine (threonine 351). An FAD-binding site is contributed by glutamine 374 to glycine 378. Glutamate 401 contributes to the octanoyl-CoA binding site. Glutamate 401 functions as the Proton acceptor in the catalytic mechanism. Position 402–405 (glycine 402–glutamine 405) interacts with FAD.

Belongs to the acyl-CoA dehydrogenase family. Homotetramer. Interacts with the heterodimeric electron transfer flavoprotein ETF. Requires FAD as cofactor. Post-translationally, acetylated. Could occur at proximity of the cofactor-binding sites and reduce the catalytic activity. Could be deacetylated by SIRT3.

It localises to the mitochondrion matrix. The catalysed reaction is a medium-chain 2,3-saturated fatty acyl-CoA + oxidized [electron-transfer flavoprotein] + H(+) = a medium-chain (2E)-enoyl-CoA + reduced [electron-transfer flavoprotein]. It catalyses the reaction pentanoyl-CoA + oxidized [electron-transfer flavoprotein] + H(+) = (2E)-pentenoyl-CoA + reduced [electron-transfer flavoprotein]. It carries out the reaction hexanoyl-CoA + oxidized [electron-transfer flavoprotein] + H(+) = (2E)-hexenoyl-CoA + reduced [electron-transfer flavoprotein]. The enzyme catalyses octanoyl-CoA + oxidized [electron-transfer flavoprotein] + H(+) = (2E)-octenoyl-CoA + reduced [electron-transfer flavoprotein]. The catalysed reaction is decanoyl-CoA + oxidized [electron-transfer flavoprotein] + H(+) = (2E)-decenoyl-CoA + reduced [electron-transfer flavoprotein]. It catalyses the reaction dodecanoyl-CoA + oxidized [electron-transfer flavoprotein] + H(+) = (2E)-dodecenoyl-CoA + reduced [electron-transfer flavoprotein]. It carries out the reaction tetradecanoyl-CoA + oxidized [electron-transfer flavoprotein] + H(+) = (2E)-tetradecenoyl-CoA + reduced [electron-transfer flavoprotein]. The enzyme catalyses oxidized [electron-transfer flavoprotein] + hexadecanoyl-CoA + H(+) = (2E)-hexadecenoyl-CoA + reduced [electron-transfer flavoprotein]. Its pathway is lipid metabolism; mitochondrial fatty acid beta-oxidation. In terms of biological role, medium-chain specific acyl-CoA dehydrogenase is one of the acyl-CoA dehydrogenases that catalyze the first step of mitochondrial fatty acid beta-oxidation, an aerobic process breaking down fatty acids into acetyl-CoA and allowing the production of energy from fats. The first step of fatty acid beta-oxidation consists in the removal of one hydrogen from C-2 and C-3 of the straight-chain fatty acyl-CoA thioester, resulting in the formation of trans-2-enoyl-CoA. Electron transfer flavoprotein (ETF) is the electron acceptor that transfers electrons to the main mitochondrial respiratory chain via ETF-ubiquinone oxidoreductase (ETF dehydrogenase). Among the different mitochondrial acyl-CoA dehydrogenases, medium-chain specific acyl-CoA dehydrogenase acts specifically on acyl-CoAs with saturated 6 to 12 carbons long primary chains. The protein is Medium-chain specific acyl-CoA dehydrogenase, mitochondrial of Macaca fascicularis (Crab-eating macaque).